A 1344-amino-acid polypeptide reads, in one-letter code: DEAD-box ATP-dependent RNA helicase FANCM (1344 aa).

A disordered region spans residues 39 to 61; the sequence is SSSHFTPLANPPITANLTKPPAK. The region spanning 124 to 292 is the Helicase ATP-binding domain; sequence ITKTALFSNT…GIIDNLQIST (169 aa). 137 to 144 provides a ligand contact to ATP; the sequence is LPTGLGKT. The short motif at 240-243 is the DEAH box element; that stretch reads DEAH. One can recognise a Helicase C-terminal domain in the interval 450 to 621; that stretch reads KLSKMLEILV…SFNFHPSPRM (172 aa). Disordered stretches follow at residues 765–790, 1110–1148, 1183–1218, and 1307–1344; these read VNTSQRKAKQVESPTSTLETTEKDYE, EVSSGAEMSADENEDVTGDSFEDSFIDDGTMPTANTQAE, YSAGPLTRINESRSDSDKSLSSLRTPKTTNSESNQD, and KQRSEAKEKEDATVIPNPGMQRSDGMEKDAPSFDLGLW. Over residues 1118–1135 the composition is skewed to acidic residues; the sequence is SADENEDVTGDSFEDSFI. Residues 1207 to 1218 are compositionally biased toward polar residues; it reads TPKTTNSESNQD. Residues 1308-1318 are compositionally biased toward basic and acidic residues; it reads QRSEAKEKEDA.

This sequence belongs to the DEAD box helicase family. DEAH subfamily. FANCM sub-subfamily.

Its subcellular location is the nucleus. It carries out the reaction ATP + H2O = ADP + phosphate + H(+). In terms of biological role, involved in ordered homologous recombination (HR) events in somatic and meiotic cells. Involved in the suppression of spontaneous HR events in somatic cells. Has an opposite function to the DNA binding cofactor MHF1 which promotes spontaneous HR. Functions in replicative repair independently of MHF1 and in a parallel pathway to the endonuclease MUS81. Acts in the same pathway as the two DNA-binding cofactors MHF1 and MHF2 to restrain class II meiotic crossover (CO), and acts exclusively with MHF1 and MHF2 during meiosis to repair DNA interstrand cross-links (ICLs). This common pathway is in parallel to the pathway that involves the RECQ4A helicase. Seems to be involved in the stabilization of recombination intermediates. Involved in DNA double-strand break (DSB) repair during meiosis. Required for synthesis-dependent strand annealing (SDSA) and to a lesser extent for single-strand annealing (SSA). May process meiotic DSB repair intermediates, possibly D-loops, driving them toward noncrossover (NCO) resolution. The chain is DEAD-box ATP-dependent RNA helicase FANCM from Arabidopsis thaliana (Mouse-ear cress).